Reading from the N-terminus, the 309-residue chain is Aspartate carbamoyltransferase catalytic subunit (309 aa).

The carbamoyl phosphate site is built by Arg-55 and Thr-56. An L-aspartate-binding site is contributed by Lys-85. Carbamoyl phosphate contacts are provided by Arg-106, His-135, and Gln-138. 2 residues coordinate L-aspartate: Arg-168 and Arg-230. The carbamoyl phosphate site is built by Leu-268 and Pro-269.

Belongs to the aspartate/ornithine carbamoyltransferase superfamily. ATCase family. As to quaternary structure, heterododecamer (2C3:3R2) of six catalytic PyrB chains organized as two trimers (C3), and six regulatory PyrI chains organized as three dimers (R2).

The enzyme catalyses carbamoyl phosphate + L-aspartate = N-carbamoyl-L-aspartate + phosphate + H(+). It functions in the pathway pyrimidine metabolism; UMP biosynthesis via de novo pathway; (S)-dihydroorotate from bicarbonate: step 2/3. Its function is as follows. Catalyzes the condensation of carbamoyl phosphate and aspartate to form carbamoyl aspartate and inorganic phosphate, the committed step in the de novo pyrimidine nucleotide biosynthesis pathway. The chain is Aspartate carbamoyltransferase catalytic subunit from Vibrio campbellii (strain ATCC BAA-1116).